The chain runs to 368 residues: Phosphoribosylformylglycinamidine cyclo-ligase (368 aa).

This sequence belongs to the AIR synthase family.

The protein resides in the cytoplasm. The catalysed reaction is 2-formamido-N(1)-(5-O-phospho-beta-D-ribosyl)acetamidine + ATP = 5-amino-1-(5-phospho-beta-D-ribosyl)imidazole + ADP + phosphate + H(+). It participates in purine metabolism; IMP biosynthesis via de novo pathway; 5-amino-1-(5-phospho-D-ribosyl)imidazole from N(2)-formyl-N(1)-(5-phospho-D-ribosyl)glycinamide: step 2/2. The polypeptide is Phosphoribosylformylglycinamidine cyclo-ligase (Novosphingobium aromaticivorans (strain ATCC 700278 / DSM 12444 / CCUG 56034 / CIP 105152 / NBRC 16084 / F199)).